A 360-amino-acid chain; its full sequence is Peptide chain release factor 1 (360 aa).

An N5-methylglutamine modification is found at glutamine 235. The span at 284–295 (ERQEQAQADTRR) shows a compositional bias: basic and acidic residues. The tract at residues 284 to 309 (ERQEQAQADTRRNLLGSGDRSDKIRT) is disordered.

This sequence belongs to the prokaryotic/mitochondrial release factor family. Post-translationally, methylated by PrmC. Methylation increases the termination efficiency of RF1.

The protein localises to the cytoplasm. Peptide chain release factor 1 directs the termination of translation in response to the peptide chain termination codons UAG and UAA. This is Peptide chain release factor 1 (prfA) from Pasteurella multocida (strain Pm70).